The chain runs to 327 residues: MAMTAEVKDELSRLVVTHVSCRKAEVSSLLRFAGGLHIVGGRVVVEAEVDLGSTARRLRREIFDLFTYSADVHVLSAGGLRKSSRYIVRVAKEGEALARQTGLLDLRGRPVRGLPAQVVGGSVADAEAAWRGAFLAHGSLTEPGRSSALEVSCPGPEAALALVGAARRLGISAKAREVRGTDRVVIRDGEAIGALLTRMGAQDTRLVWEERRMRREVRATANRLANFDDANLRRSARAAVAAAARVERALDILGDEVPDHLAAAGHLRVEHRQASLEELGQLADPPMTKDAVAGRIRRLLSMADRKAKETGIPDTESAVTADLLDDA.

Positions 275-308 (SLEELGQLADPPMTKDAVAGRIRRLLSMADRKAK) form a DNA-binding region, H-T-H motif. The tract at residues 306 to 327 (KAKETGIPDTESAVTADLLDDA) is disordered.

The protein belongs to the WhiA family.

Functionally, involved in cell division and chromosome segregation. This Rhodococcus jostii (strain RHA1) protein is Probable cell division protein WhiA.